Consider the following 120-residue polypeptide: Large ribosomal subunit protein uL18 (120 aa).

It belongs to the universal ribosomal protein uL18 family. As to quaternary structure, part of the 50S ribosomal subunit; part of the 5S rRNA/L5/L18/L25 subcomplex. Contacts the 5S and 23S rRNAs.

Its function is as follows. This is one of the proteins that bind and probably mediate the attachment of the 5S RNA into the large ribosomal subunit, where it forms part of the central protuberance. The sequence is that of Large ribosomal subunit protein uL18 from Allorhizobium ampelinum (strain ATCC BAA-846 / DSM 112012 / S4) (Agrobacterium vitis (strain S4)).